The following is a 587-amino-acid chain: ATP-dependent zinc metalloprotease FtsH 2 (587 aa).

Over 1 to 12 (MSSDRTREVTKR) the chain is Cytoplasmic. A helical membrane pass occupies residues 13–33 (ILMVLFGLWLLQFFFLPPLTT). Over 34–102 (RPTELSYSAF…EQRYEVTRTP (69 aa)) the chain is Extracellular. Residues 103-123 (WWVTLLPTVLWLAVMVGLFAW) traverse the membrane as a helical segment. At 124 to 587 (AQKRQAGAFG…GDDVRRILSA (464 aa)) the chain is on the cytoplasmic side. 192–199 (GPPGTGKT) contributes to the ATP binding site. Residue His-416 coordinates Zn(2+). The active site involves Glu-417. Residues His-420 and Asp-492 each contribute to the Zn(2+) site.

It in the central section; belongs to the AAA ATPase family. In the C-terminal section; belongs to the peptidase M41 family. As to quaternary structure, homohexamer. Requires Zn(2+) as cofactor.

It localises to the cell membrane. In terms of biological role, acts as a processive, ATP-dependent zinc metallopeptidase for both cytoplasmic and membrane proteins. Plays a role in the quality control of integral membrane proteins. This Symbiobacterium thermophilum (strain DSM 24528 / JCM 14929 / IAM 14863 / T) protein is ATP-dependent zinc metalloprotease FtsH 2.